We begin with the raw amino-acid sequence, 111 residues long: Large ribosomal subunit protein bL21 (111 aa).

It belongs to the bacterial ribosomal protein bL21 family. Part of the 50S ribosomal subunit. Contacts protein L20.

This protein binds to 23S rRNA in the presence of protein L20. This Thermosynechococcus vestitus (strain NIES-2133 / IAM M-273 / BP-1) protein is Large ribosomal subunit protein bL21.